Reading from the N-terminus, the 842-residue chain is Microcephalin (842 aa).

The 93-residue stretch at 1 to 93 (MAAPILKDVV…AHIDESLFPA (93 aa)) folds into the BRCT 1 domain. Phosphoserine is present on residues Ser-279, Ser-287, Ser-296, and Ser-333. Thr-335 bears the Phosphothreonine mark. Basic residues predominate over residues 346 to 359 (HSRPRSSSVKRKRV). Disordered regions lie at residues 346-375 (HSRP…KRKR), 418-443 (PDNL…AQFS), and 563-624 (VGLK…PTRR). Polar residues-rich tracts occupy residues 434–443 (QLPSNPAQFS) and 566–582 (KSTQ…NSSE). Basic and acidic residues predominate over residues 586 to 608 (PSEHEPRSVVDCNVERSAEEKEN). BRCT domains follow at residues 647–737 (SGKG…PFEL) and 758–840 (YRGT…NYLL).

As to quaternary structure, interacts with CDC27 and maybe other components of the APC/C complex. Interacts with histone variant H2AX under DNA damage conditions.

It localises to the cytoplasm. Its subcellular location is the cytoskeleton. The protein localises to the microtubule organizing center. The protein resides in the centrosome. Its function is as follows. Implicated in chromosome condensation and DNA damage induced cellular responses. May play a role in neurogenesis and regulation of the size of the cerebral cortex. The protein is Microcephalin of Macaca fascicularis (Crab-eating macaque).